Reading from the N-terminus, the 572-residue chain is uncharacterized protein (572 aa).

The segment at 543–572 (AYKKSSNTNSTTNSMNPRRSTVSSEDWVLN) is disordered. Low complexity predominate over residues 547-563 (SSNTNSTTNSMNPRRST).

This is an uncharacterized protein from Acanthamoeba polyphaga (Amoeba).